We begin with the raw amino-acid sequence, 383 residues long: N-acetyldiaminopimelate deacetylase (383 aa).

The active site involves aspartate 75. The active-site Proton acceptor is glutamate 134.

Belongs to the peptidase M20A family. N-acetyldiaminopimelate deacetylase subfamily.

The catalysed reaction is N-acetyl-(2S,6S)-2,6-diaminopimelate + H2O = (2S,6S)-2,6-diaminopimelate + acetate. The protein operates within amino-acid biosynthesis; L-lysine biosynthesis via DAP pathway; LL-2,6-diaminopimelate from (S)-tetrahydrodipicolinate (acetylase route): step 3/3. Its function is as follows. Catalyzes the conversion of N-acetyl-diaminopimelate to diaminopimelate and acetate. This Lactobacillus acidophilus (strain ATCC 700396 / NCK56 / N2 / NCFM) protein is N-acetyldiaminopimelate deacetylase.